Consider the following 628-residue polypeptide: Nuclear receptor subfamily 4 group A member 3 (628 aa).

An activation function (AF)-1 domain region spans residues 1–112 (MPCVQAQYSP…HHHHHHHHHH (112 aa)). The interval 1 to 140 (MPCVQAQYSP…PSTSMYFKQS (140 aa)) is required for DNA-PK heterotrimer. Residues 1–293 (MPCVQAQYSP…NRSSSSGEGT (293 aa)) form an interaction with NCOA1, NCOA2, NCOA3 and KAT2B region. Disordered stretches follow at residues 96–163 (HGYH…DELP) and 269–290 (ASSLLGESPSLPSPPNRSSSSG). A compositionally biased stretch (basic residues) spans 97 to 113 (GYHHHHHHHHHHHHHHQ). A compositionally biased stretch (pro residues) spans 142–151 (PSTPTTPGFP). Low complexity predominate over residues 270–289 (SSLLGESPSLPSPPNRSSSS). Positions 291 to 366 (EGTCAVCGDN…VGMVKEVVRT (76 aa)) form a DNA-binding region, nuclear receptor. 2 NR C4-type zinc fingers span residues 294–314 (CAVCGDNAACQHYGVRTCEGC) and 330–354 (CLANKNCPVDKRRRNRCQYCRFQKC). Positions 366–396 (TDSLKGRRGRLPSKPKSPLQQEPSQPSPPSP) are disordered. Residues 379–389 (KPKSPLQQEPS) are compositionally biased toward low complexity. The tract at residues 381–628 (KSPLQQEPSQ…DKLFLDTLPF (248 aa)) is interaction with KAT2B. Residues 396–625 (PPICMMNALV…SVIDKLFLDT (230 aa)) form the NR LBD domain.

This sequence belongs to the nuclear hormone receptor family. NR4 subfamily. Interacts with SIX3 (via homeobox); differentially regulates the transcriptional activities of NR4A3. Interacts with NR3C1 (via nuclear receptor DNA-binding domain); the interactions represses transcription activity of NR4A3 on the POMC promoter Nur response element (NurRE). Interacts with TRIM28; the interactions potentiates NR4A3 activity on NurRE promoter. Binds DNA as a monomer and homodimer. Interacts with PARP1; activates PARP1 by improving acetylation of PARP1 and suppressing the interaction between PARP1 and SIRT1. Interacts with the constituents of DNA-PK heterotrimer PRKDC, XRCC6 and XRCC5; phosphorylates and prevents NR4A3 ubiquitinylation and degradation. Interacts with NCOA2; potentiates the activity of the NR4A3. Interacts with NCOA1, NCOA3, MED1 and KAT2B. Interacts with EP300 and NCOA2; mediates the recruitment of MED1 in the coactivator complex. Phosphorylated by PRKDC. As to expression, expressed at high levels in cultured apoptotic neuronal cells and fetal brain, and at low level in adult brain.

It localises to the nucleus. Functionally, transcriptional activator that binds to regulatory elements in promoter regions in a cell- and response element (target)-specific manner. Induces gene expression by binding as monomers to the NR4A1 response element (NBRE) 5'-AAAAGGTCA-3' site and as homodimers to the Nur response element (NurRE) site in the promoter of their regulated target genes. Plays a role in the regulation of proliferation, survival and differentiation of many different cell types and also in metabolism and inflammation. Mediates proliferation of vascular smooth muscle, myeloid progenitor cell and type B pancreatic cells; promotes mitogen-induced vascular smooth muscle cell proliferation through transactivation of SKP2 promoter by binding a NBRE site. Upon PDGF stimulation, stimulates vascular smooth muscle cell proliferation by regulating CCND1 and CCND2 expression. In islets, induces type B pancreatic cell proliferation through up-regulation of genes that activate cell cycle, as well as genes that cause degradation of the CDKN1A. Negatively regulates myeloid progenitor cell proliferation by repressing RUNX1 in a NBRE site-independent manner. During inner ear, plays a role as a key mediator of the proliferative growth phase of semicircular canal development. Also mediates survival of neuron and smooth muscle cells; mediates CREB-induced neuronal survival, and during hippocampus development, plays a critical role in pyramidal cell survival and axonal guidance. Is required for S phase entry of the cell cycle and survival of smooth muscle cells by inducing CCND1, resulting in RB1 phosphorylation. Binds to NBRE motif in CCND1 promoter, resulting in the activation of the promoter and CCND1 transcription. Also plays a role in inflammation; Upon TNF stimulation, mediates monocyte adhesion by inducing the expression of VCAM1 and ICAM1 by binding to the NBRE consensus site. In mast cells activated by Fc-epsilon receptor cross-linking, promotes the synthesis and release of cytokines but impairs events leading to degranulation. Also plays a role in metabolism; by modulating feeding behavior; and by playing a role in energy balance by inhibiting the glucocorticoid-induced orexigenic neuropeptides AGRP expression, at least in part by forming a complex with activated NR3C1 on the AGRP-glucocorticoid response element (GRE), and thus weakening the DNA binding activity of NR3C1. Upon catecholamines stimulation, regulates gene expression that controls oxidative metabolism in skeletal muscle. Plays a role in glucose transport by regulating translocation of the SLC2A4 glucose transporter to the cell surface. Finally, during gastrulation plays a crucial role in the formation of anterior mesoderm by controlling cell migration. Also participates in cardiac hypertrophy by activating PARP1. This Rattus norvegicus (Rat) protein is Nuclear receptor subfamily 4 group A member 3 (Nr4a3).